The following is a 336-amino-acid chain: Glycerol-3-phosphate dehydrogenase [NAD(P)+] (336 aa).

Ser-14, Trp-15, Arg-35, Arg-36, and Lys-109 together coordinate NADPH. Residues Lys-109 and Gly-139 each contribute to the sn-glycerol 3-phosphate site. Ala-143 lines the NADPH pocket. Positions 194, 247, 257, 258, and 259 each coordinate sn-glycerol 3-phosphate. The Proton acceptor role is filled by Lys-194. Arg-258 contributes to the NADPH binding site. Glu-284 is a binding site for NADPH.

It belongs to the NAD-dependent glycerol-3-phosphate dehydrogenase family.

It is found in the cytoplasm. The enzyme catalyses sn-glycerol 3-phosphate + NAD(+) = dihydroxyacetone phosphate + NADH + H(+). The catalysed reaction is sn-glycerol 3-phosphate + NADP(+) = dihydroxyacetone phosphate + NADPH + H(+). Its pathway is membrane lipid metabolism; glycerophospholipid metabolism. Its function is as follows. Catalyzes the reduction of the glycolytic intermediate dihydroxyacetone phosphate (DHAP) to sn-glycerol 3-phosphate (G3P), the key precursor for phospholipid synthesis. This chain is Glycerol-3-phosphate dehydrogenase [NAD(P)+], found in Streptomyces coelicolor (strain ATCC BAA-471 / A3(2) / M145).